The primary structure comprises 677 residues: Methionine--tRNA ligase (677 aa).

A 'HIGH' region motif is present at residues 15–25 (PYANGSIHLGH). Residues C146, C149, C159, and C162 each contribute to the Zn(2+) site. The 'KMSKS' region motif lies at 333–337 (KMSKS). K336 provides a ligand contact to ATP. The tRNA-binding domain occupies 575–677 (DFAKIDLRVA…DGAKPGQQVK (103 aa)).

This sequence belongs to the class-I aminoacyl-tRNA synthetase family. MetG type 1 subfamily. As to quaternary structure, homodimer. The cofactor is Zn(2+).

It localises to the cytoplasm. The enzyme catalyses tRNA(Met) + L-methionine + ATP = L-methionyl-tRNA(Met) + AMP + diphosphate. Its function is as follows. Is required not only for elongation of protein synthesis but also for the initiation of all mRNA translation through initiator tRNA(fMet) aminoacylation. The polypeptide is Methionine--tRNA ligase (Salmonella typhimurium (strain LT2 / SGSC1412 / ATCC 700720)).